A 292-amino-acid polypeptide reads, in one-letter code: Phosphoribulokinase 2 (292 aa).

Residue 12-20 (GSSGAGTST) coordinates ATP.

This sequence belongs to the phosphoribulokinase family.

It carries out the reaction D-ribulose 5-phosphate + ATP = D-ribulose 1,5-bisphosphate + ADP + H(+). It participates in carbohydrate biosynthesis; Calvin cycle. The polypeptide is Phosphoribulokinase 2 (prkB) (Cereibacter sphaeroides (Rhodobacter sphaeroides)).